The sequence spans 106 residues: Protein translocase subunit SecE (106 aa).

2 helical membrane-spanning segments follow: residues 20-40 (LPIR…LAAI) and 75-95 (IVIG…SIIV).

It belongs to the SecE/SEC61-gamma family. As to quaternary structure, component of the Sec protein translocase complex. Heterotrimer consisting of SecY, SecE and SecG subunits. The heterotrimers can form oligomers, although 1 heterotrimer is thought to be able to translocate proteins. Interacts with the ribosome. Interacts with SecDF, and other proteins may be involved. Interacts with SecA.

Its subcellular location is the cell inner membrane. Essential subunit of the Sec protein translocation channel SecYEG. Clamps together the 2 halves of SecY. May contact the channel plug during translocation. The chain is Protein translocase subunit SecE from Haemophilus influenzae (strain ATCC 51907 / DSM 11121 / KW20 / Rd).